The primary structure comprises 433 residues: Keratin, type I cytoskeletal 17 (433 aa).

The tract at residues 1–24 is disordered; sequence MTTTIRQFTSSSSIKGSSGLGGGS. A head region spans residues 1–83; the sequence is MTTTIRQFTS…GGVDGLLAGG (83 aa). Phosphoserine occurs at positions 12 and 13. Lys15 participates in a covalent cross-link: Glycyl lysine isopeptide (Lys-Gly) (interchain with G-Cter in SUMO1); alternate. Residue Lys15 forms a Glycyl lysine isopeptide (Lys-Gly) (interchain with G-Cter in SUMO2); alternate linkage. A phosphoserine mark is found at Ser25, Ser32, Ser34, and Ser39. Ser44 carries the phosphoserine; by RPS6KA1 modification. The segment at 84–120 is coil 1A; sequence EKATMQNLNDRLASYLDKVRALEEANTELEVKIRDWY. Residues 84 to 395 form the IF rod domain; it reads EKATMQNLND…RLLEGEDAHL (312 aa). At Thr110 the chain carries Phosphothreonine. Positions 121 to 138 are linker 1; it reads QKQAPGPARDYSAYYQTI. The interval 139–230 is coil 1B; it reads EDLKNKILVA…NHEEEMNALR (92 aa). Positions 231-250 are linker 12; it reads GQVGGEINVEMDAAPGVDLS. Residues 251-392 form a coil 2 region; that stretch reads RILSEMRDQY…TYRRLLEGED (142 aa). Lys278 participates in a covalent cross-link: Glycyl lysine isopeptide (Lys-Gly) (interchain with G-Cter in SUMO2). Phosphothreonine is present on Thr279. Ser323 carries the phosphoserine modification. A tail region spans residues 393 to 433; sequence AHLTQYKPKEPVTTRQVRTIVEEVQDGKVISSREQVHQTTR. Glycyl lysine isopeptide (Lys-Gly) (interchain with G-Cter in SUMO1); alternate cross-links involve residues Lys399, Lys401, and Lys420. Residues Lys399, Lys401, and Lys420 each participate in a glycyl lysine isopeptide (Lys-Gly) (interchain with G-Cter in SUMO2); alternate cross-link.

It belongs to the intermediate filament family. As to quaternary structure, heterodimer of a type I and a type II keratin. KRT17 associates with KRT6 isomers (KRT6A or KRT6B). Interacts with TRADD and SFN. Post-translationally, phosphorylation at Ser-44 occurs in a growth- and stress-dependent fashion in skin keratinocytes, it has no effect on filament organization.

The protein localises to the cytoplasm. Functionally, type I keratin involved in the formation and maintenance of various skin appendages, specifically in determining shape and orientation of hair. Required for the correct growth of hair follicles, in particular for the persistence of the anagen (growth) state. Modulates the function of TNF-alpha in the specific context of hair cycling. Regulates protein synthesis and epithelial cell growth through binding to the adapter protein SFN and by stimulating Akt/mTOR pathway. Involved in tissue repair. May be a marker of basal cell differentiation in complex epithelia and therefore indicative of a certain type of epithelial 'stem cells'. Acts as a promoter of epithelial proliferation by acting a regulator of immune response in skin: promotes Th1/Th17-dominated immune environment contributing to the development of basaloid skin tumors. May act as an autoantigen in the immunopathogenesis of psoriasis, with certain peptide regions being a major target for autoreactive T-cells and hence causing their proliferation. This is Keratin, type I cytoskeletal 17 from Rattus norvegicus (Rat).